Here is a 414-residue protein sequence, read N- to C-terminus: Phospholipid-transporting ATPase accessory subunit LEM3 (414 aa).

Residues 1 to 50 (MVNFDLGQVGEVFRRKDKGAIVSGDNPEEEEDVDASEFEEDEVKPVRTKN) are required for localization to the plasma membrane. Residues 1–74 (MVNFDLGQVG…AINPVLTPRT (74 aa)) are Cytoplasmic-facing. Residues 20–52 (AIVSGDNPEEEEDVDASEFEEDEVKPVRTKNRR) are disordered. The segment covering 26–42 (NPEEEEDVDASEFEEDE) has biased composition (acidic residues). Position 36 is a phosphoserine (serine 36). The chain crosses the membrane as a helical span at residues 75–95 (VLPLYLLIAVVFVIVGGCILA). The Extracellular portion of the chain corresponds to 96 to 372 (QNSKVDEVTI…HGSHLGGRNP (277 aa)). 2 cysteine pairs are disulfide-bonded: cysteine 110-cysteine 159 and cysteine 216-cysteine 231. N-linked (GlcNAc...) asparagine glycosylation occurs at asparagine 113. N-linked (GlcNAc...) asparagine glycans are attached at residues asparagine 240, asparagine 256, asparagine 279, asparagine 298, and asparagine 332. The chain crosses the membrane as a helical span at residues 373–393 (FLGIVYLIGGCICAAMALILL). The Cytoplasmic portion of the chain corresponds to 394 to 414 (TFWLFGGRKIADASSLSWNMK). The interval 400–414 (GRKIADASSLSWNMK) is required for localization to the plasma membrane.

Belongs to the CDC50/LEM3 family. Component of a flippase complex consisting of DNF1 or DNF2 and LEM3. Interacts with DNF1; the interaction is direct and required for their mutual export from the endoplasmic reticulum. Interacts with DNF2; the interaction is direct and required for their mutual export from the endoplasmic reticulum.

The protein resides in the cell membrane. In terms of biological role, accessory component of a P4-ATPase flippase complex which catalyzes the hydrolysis of ATP coupled to the transport of glucosylceramide, phosphatidylcholine, phosphatidylethanolamine, and small amounts of phosphatidylserine from the lumenal to the cytosolic leaflet of the cell membrane and ensures the maintenance of asymmetric distribution of phospholipids. Contributes to substrate binding and specificity of the P4-ATPase catalytic subunit. The polypeptide is Phospholipid-transporting ATPase accessory subunit LEM3 (Saccharomyces cerevisiae (strain ATCC 204508 / S288c) (Baker's yeast)).